The following is a 184-amino-acid chain: Large ribosomal subunit protein uL5 (184 aa).

This sequence belongs to the universal ribosomal protein uL5 family. In terms of assembly, part of the 50S ribosomal subunit; part of the 5S rRNA/L5/L18/L25 subcomplex. Contacts the 5S rRNA and the P site tRNA. Forms a bridge to the 30S subunit in the 70S ribosome.

In terms of biological role, this is one of the proteins that bind and probably mediate the attachment of the 5S RNA into the large ribosomal subunit, where it forms part of the central protuberance. In the 70S ribosome it contacts protein S13 of the 30S subunit (bridge B1b), connecting the 2 subunits; this bridge is implicated in subunit movement. Contacts the P site tRNA; the 5S rRNA and some of its associated proteins might help stabilize positioning of ribosome-bound tRNAs. This is Large ribosomal subunit protein uL5 from Pelagibacter ubique (strain HTCC1062).